Reading from the N-terminus, the 122-residue chain is MIQKETNLVVADNSGAKKVRCIHVFGGTGRRYASLGDQVIVSVKTAVPGGIVKKKDVCKAVVVRAVKESRRKDGSYIRFDENAVVILNAQGEPRGTRIFGPVARELRDKRYMKIVSLAPEVL.

Belongs to the universal ribosomal protein uL14 family. As to quaternary structure, part of the 50S ribosomal subunit. Forms a cluster with proteins L3 and L19. In the 70S ribosome, L14 and L19 interact and together make contacts with the 16S rRNA in bridges B5 and B8.

Functionally, binds to 23S rRNA. Forms part of two intersubunit bridges in the 70S ribosome. This is Large ribosomal subunit protein uL14 from Chlorobium chlorochromatii (strain CaD3).